The primary structure comprises 681 residues: Potassium-transporting ATPase ATP-binding subunit 1 (681 aa).

Helical transmembrane passes span 30–50 (LLVY…FFGI), 59–79 (LAIA…EAIA), 216–236 (ILLV…LPFT), and 255–275 (IALL…SIGI). The active-site 4-aspartylphosphate intermediate is the D306. Residues D343, E347, 376–383 (FTATTRMS), and K394 each bind ATP. Mg(2+)-binding residues include D517 and D521. The next 3 membrane-spanning stretches (helical) occupy residues 587–607 (FAII…LNLM), 615–635 (AILS…PLSL), and 661–681 (LIAP…LGIV).

It belongs to the cation transport ATPase (P-type) (TC 3.A.3) family. Type IA subfamily. The system is composed of three essential subunits: KdpA, KdpB and KdpC.

The protein resides in the cell membrane. The enzyme catalyses K(+)(out) + ATP + H2O = K(+)(in) + ADP + phosphate + H(+). Functionally, part of the high-affinity ATP-driven potassium transport (or Kdp) system, which catalyzes the hydrolysis of ATP coupled with the electrogenic transport of potassium into the cytoplasm. This subunit is responsible for energy coupling to the transport system and for the release of the potassium ions to the cytoplasm. The chain is Potassium-transporting ATPase ATP-binding subunit 1 from Listeria innocua serovar 6a (strain ATCC BAA-680 / CLIP 11262).